We begin with the raw amino-acid sequence, 296 residues long: 4-hydroxybenzoate octaprenyltransferase (296 aa).

The next 8 helical transmembrane spans lie at 29-49 (IGIY…ADGV), 55-75 (LLIF…INDF), 102-122 (AWIT…LTNA), 146-166 (YYPQ…AFTA), 169-189 (GELP…TVAY), 219-239 (LIIG…GNRF), 241-261 (LGLC…WEAW), and 275-295 (FLHN…DYAL).

The protein belongs to the UbiA prenyltransferase family. It depends on Mg(2+) as a cofactor.

It is found in the cell inner membrane. The enzyme catalyses all-trans-octaprenyl diphosphate + 4-hydroxybenzoate = 4-hydroxy-3-(all-trans-octaprenyl)benzoate + diphosphate. It functions in the pathway cofactor biosynthesis; ubiquinone biosynthesis. In terms of biological role, catalyzes the prenylation of para-hydroxybenzoate (PHB) with an all-trans polyprenyl group. Mediates the second step in the final reaction sequence of ubiquinone-8 (UQ-8) biosynthesis, which is the condensation of the polyisoprenoid side chain with PHB, generating the first membrane-bound Q intermediate 3-octaprenyl-4-hydroxybenzoate. The chain is 4-hydroxybenzoate octaprenyltransferase from Pseudomonas aeruginosa (strain LESB58).